A 68-amino-acid polypeptide reads, in one-letter code: Adipokinetic prohormone type 1 (68 aa).

A signal peptide spans 1–20; the sequence is MNKIYFVIVFVACFCLFAEA. Position 21 is a pyrrolidone carboxylic acid (glutamine 21). Glycine 30 carries the post-translational modification Glycine amide. The propeptide occupies 34 to 68; that stretch reads SGVAPMSCKNEEAVATIFKLIQNEAERFIICQQKS.

In terms of tissue distribution, expressed in antennal lobe (AL), corpora cardiaca (CC), corpora allata (CA) and gnathal ganglion (GNG) (at protein level). Expression in CC and CA detected in all animals, expression in GNG in some animals and in AL in few animals (at protein level).

The protein localises to the secreted. In terms of biological role, this hormone, released from cells in the corpora cardiaca, causes release of diglycerides from the fat body and stimulation of muscles to use these diglycerides as an energy source during energy-demanding processes. This chain is Adipokinetic prohormone type 1, found in Agrotis ipsilon (Black cutworm moth).